We begin with the raw amino-acid sequence, 286 residues long: Fructose-bisphosphate aldolase (286 aa).

Position 50 (serine 50) interacts with D-glyceraldehyde 3-phosphate. The active-site Proton donor is aspartate 85. Positions 86, 107, 137, and 181 each coordinate Zn(2+). Residue glycine 182 coordinates dihydroxyacetone phosphate. Zn(2+) is bound at residue histidine 209. Dihydroxyacetone phosphate contacts are provided by residues 210–212 (GGT) and 231–234 (NVNT).

It belongs to the class II fructose-bisphosphate aldolase family. Zn(2+) is required as a cofactor.

It catalyses the reaction beta-D-fructose 1,6-bisphosphate = D-glyceraldehyde 3-phosphate + dihydroxyacetone phosphate. Its pathway is carbohydrate degradation; glycolysis; D-glyceraldehyde 3-phosphate and glycerone phosphate from D-glucose: step 4/4. In terms of biological role, catalyzes the aldol condensation of dihydroxyacetone phosphate (DHAP or glycerone-phosphate) with glyceraldehyde 3-phosphate (G3P) to form fructose 1,6-bisphosphate (FBP) in gluconeogenesis and the reverse reaction in glycolysis. In Staphylococcus aureus (strain MSSA476), this protein is Fructose-bisphosphate aldolase (fba).